The chain runs to 115 residues: T cell receptor beta variable 7-8 (115 aa).

Residues 1–21 (MGTRLLCWVVLGFLGTDHTGA) form the signal peptide. The Ig-like domain maps to 22-115 (GVSQSPRYKV…SAVYLCASSL (94 aa)). An intrachain disulfide couples Cys-42 to Cys-111.

In terms of assembly, alpha-beta TR is a heterodimer composed of an alpha and beta chain; disulfide-linked. The alpha-beta TR is associated with the transmembrane signaling CD3 coreceptor proteins to form the TR-CD3 (TcR or TCR). The assembly of alpha-beta TR heterodimers with CD3 occurs in the endoplasmic reticulum where a single alpha-beta TR heterodimer associates with one CD3D-CD3E heterodimer, one CD3G-CD3E heterodimer and one CD247 homodimer forming a stable octameric structure. CD3D-CD3E and CD3G-CD3E heterodimers preferentially associate with TR alpha and TR beta chains, respectively. The association of the CD247 homodimer is the last step of TcR assembly in the endoplasmic reticulum and is required for transport to the cell surface.

The protein localises to the cell membrane. Functionally, v region of the variable domain of T cell receptor (TR) beta chain that participates in the antigen recognition. Alpha-beta T cell receptors are antigen specific receptors which are essential to the immune response and are present on the cell surface of T lymphocytes. Recognize peptide-major histocompatibility (MH) (pMH) complexes that are displayed by antigen presenting cells (APC), a prerequisite for efficient T cell adaptive immunity against pathogens. Binding of alpha-beta TR to pMH complex initiates TR-CD3 clustering on the cell surface and intracellular activation of LCK that phosphorylates the ITAM motifs of CD3G, CD3D, CD3E and CD247 enabling the recruitment of ZAP70. In turn ZAP70 phosphorylates LAT, which recruits numerous signaling molecules to form the LAT signalosome. The LAT signalosome propagates signal branching to three major signaling pathways, the calcium, the mitogen-activated protein kinase (MAPK) kinase and the nuclear factor NF-kappa-B (NF-kB) pathways, leading to the mobilization of transcription factors that are critical for gene expression and essential for T cell growth and differentiation. The T cell repertoire is generated in the thymus, by V-(D)-J rearrangement. This repertoire is then shaped by intrathymic selection events to generate a peripheral T cell pool of self-MH restricted, non-autoaggressive T cells. Post-thymic interaction of alpha-beta TR with the pMH complexes shapes TR structural and functional avidity. The chain is T cell receptor beta variable 7-8 from Homo sapiens (Human).